Reading from the N-terminus, the 356-residue chain is Branched-chain-amino-acid transaminase 1 (356 aa).

N6-(pyridoxal phosphate)lysine is present on Lys197.

It belongs to the class-IV pyridoxal-phosphate-dependent aminotransferase family. Requires pyridoxal 5'-phosphate as cofactor.

The catalysed reaction is L-leucine + 2-oxoglutarate = 4-methyl-2-oxopentanoate + L-glutamate. It carries out the reaction L-isoleucine + 2-oxoglutarate = (S)-3-methyl-2-oxopentanoate + L-glutamate. It catalyses the reaction L-valine + 2-oxoglutarate = 3-methyl-2-oxobutanoate + L-glutamate. It functions in the pathway amino-acid biosynthesis; L-isoleucine biosynthesis; L-isoleucine from 2-oxobutanoate: step 4/4. It participates in amino-acid biosynthesis; L-leucine biosynthesis; L-leucine from 3-methyl-2-oxobutanoate: step 4/4. The protein operates within amino-acid biosynthesis; L-valine biosynthesis; L-valine from pyruvate: step 4/4. Its activity is regulated as follows. Inhibited by canaline. In terms of biological role, transaminates branched-chain amino acids and ketoglutarate. Involved in the final step of the methionine regeneration pathway, where ketomethiobutyrate (KMTB) is converted to methionine via a transamination. The amino donor preference is isoleucine, leucine, valine, phenylalanine, and tyrosine. The sequence is that of Branched-chain-amino-acid transaminase 1 (ilvE) from Bacillus subtilis (strain 168).